The chain runs to 2033 residues: Envoplakin (2033 aa).

A compositionally biased stretch (low complexity) spans 1–27 (MFKGLSKGSQGKGSPKGSPAKGSPKGS). Disordered stretches follow at residues 1–37 (MFKG…AATQ) and 65–85 (QQDR…ETGR). The tract at residues 1 to 841 (MFKGLSKGSQ…LEPTLAVSAP (841 aa)) is globular 1. Residues 12-28 (KGSPKGSPAKGSPKGSP) are 4 X 4 AA tandem repeats of K-G-S-P. Residues 71-84 (SEQSQALQHQQETG) show a composition bias toward polar residues. One copy of the Spectrin repeat lies at 229 to 330 (YTHLQGCTRQ…LCICQETQLQ (102 aa)). The segment covering 388 to 401 (TERATGDLQRRSRD) has biased composition (basic and acidic residues). 2 disordered regions span residues 388–418 (TERA…PLHV) and 891–916 (SEDI…ESEA). The region spanning 413 to 470 (QQPLHVDSICDWDSGEVQLLQGERYKLVDNTDPHAWVVQGPGGETKRAPAACFCIPAP) is the SH3 domain. Positions 842 to 1673 (KRPRVAPLQE…AKVSREELSQ (832 aa)) are central fibrous rod domain. Positions 845-1135 (RVAPLQESIQ…AISSVEPKVI (291 aa)) form a coiled coil. Over residues 891–902 (SEDIRRTHDAKQ) the composition is skewed to basic and acidic residues. The Plectin 1 repeat unit spans residues 1185 to 1226 (KQRPKVQLQERVHEIFQVDPETEQEITRLKAKLQEMAGKRSG). Ser-1575 carries the post-translational modification Phosphoserine. Low complexity predominate over residues 1614–1623 (QEESKLLSQK). The disordered stretch occupies residues 1614–1636 (QEESKLLSQKTESERQKAAQRGQ). A globular 2 region spans residues 1674–2033 (ETQTRETNLS…ASPTVPRSLR (360 aa)). The stretch at 1678–1713 (RETNLSTKISILEPETGKDMSPYEAYKRGIIDRGQY) is one Plectin 2 repeat. A Phosphoserine modification is found at Ser-1799. Plectin repeat units lie at residues 1818 to 1855 (LGLG…PITG), 1856 to 1893 (QKLL…NTST), 1894 to 1931 (QRLL…RESV), 1932 to 1969 (LPHL…EELA), and 1970 to 2007 (QLLQ…PLSG). Residue Ser-2025 is modified to Phosphoserine.

Belongs to the plakin or cytolinker family. As to quaternary structure, may form a homodimer or a heterodimer with PPL. As to expression, exclusively expressed in stratified squamous epithelia.

It localises to the cell junction. The protein localises to the desmosome. The protein resides in the cornified envelope. It is found in the cytoplasm. Its subcellular location is the cytoskeleton. In terms of biological role, component of the cornified envelope of keratinocytes. May link the cornified envelope to desmosomes and intermediate filaments. The chain is Envoplakin (EVPL) from Homo sapiens (Human).